Consider the following 247-residue polypeptide: Potassium channel Ftrac_2467 (247 aa).

A run of 6 helical transmembrane segments spans residues 23 to 44, 56 to 78, 89 to 117, 142 to 165, 187 to 210, and 215 to 237; these read TRIE…VLSS, SMRD…YQHY, KVTI…RFLS, LKLL…LMYW, SIIA…IDPW, and TTIL…GRIT. A RxxxFSD motif motif is present at residues 24 to 30; the sequence is RIETFSD.

The protein belongs to the TMEM175 family. Homotetramer.

It is found in the cell membrane. The catalysed reaction is K(+)(in) = K(+)(out). Potassium channel; forms a potassium-permeable leak-like channel with weak selectivity for potassium. The channel is permeable for K(+), Rb(+) and Cs(+). In Marivirga tractuosa (strain ATCC 23168 / DSM 4126 / NBRC 15989 / NCIMB 1408 / VKM B-1430 / H-43) (Microscilla tractuosa), this protein is Potassium channel Ftrac_2467.